The following is a 309-amino-acid chain: Calcium homeostasis modulator protein 5 (309 aa).

Over 1 to 15 the chain is Cytoplasmic; that stretch reads MDAFQSILKFFLNQK. A helical membrane pass occupies residues 16 to 37; that stretch reads TAIGYSFMALLTVGSERLFSLV. A 1,2-diacyl-sn-glycero-3-phosphate-binding residues include R32 and V37. Residues 38-45 lie on the Extracellular side of the membrane; the sequence is AFKCPCSI. 3 cysteine pairs are disulfide-bonded: C41-C127, C43-C158, and C142-C149. Residues 46–70 form a helical membrane-spanning segment; sequence ENTAYGLVFLFAPAWVLLILGFFLN. Over 71–99 the chain is Cytoplasmic; sequence NKAWRLFTGCCMNPQKIFPRRRCCRFFYV. Residues 100-129 form a helical membrane-spanning segment; it reads LGHITLSSLVAPVMWLSVALLNGTFYECAM. N121 contributes to the a 1,2-diacyl-sn-glycero-3-phosphate binding site. The Extracellular portion of the chain corresponds to 130–174; it reads SGTRSTRLLEMICKGKPKECWEELHKVSCGKSSMAAMDSEEVRLS. The helical transmembrane segment at 175–200 threads the bilayer; the sequence is LQAQSQILGWCLICSASFFSLLTTCY. Residues 201–309 are Cytoplasmic-facing; that stretch reads ARCRSKVSYL…MILVGTAQSL (109 aa). R202 contacts a 1,2-diacyl-sn-glycero-3-phosphate.

This sequence belongs to the CALHM family. In terms of assembly, oligomerizes to form undecameric cone-shaped channels.

Its subcellular location is the membrane. May assemble to form large pore channels with gating and ion conductance likely regulated by membrane lipids. This is Calcium homeostasis modulator protein 5 from Rattus norvegicus (Rat).